Here is a 365-residue protein sequence, read N- to C-terminus: Chorismate synthase (365 aa).

Arg48 and Arg54 together coordinate NADP(+). Residues 125-127 (RSS), 238-239 (NA), Gly278, 293-297 (KPTSS), and Arg319 each bind FMN.

The protein belongs to the chorismate synthase family. Homotetramer. The cofactor is FMNH2.

The enzyme catalyses 5-O-(1-carboxyvinyl)-3-phosphoshikimate = chorismate + phosphate. It participates in metabolic intermediate biosynthesis; chorismate biosynthesis; chorismate from D-erythrose 4-phosphate and phosphoenolpyruvate: step 7/7. Its function is as follows. Catalyzes the anti-1,4-elimination of the C-3 phosphate and the C-6 proR hydrogen from 5-enolpyruvylshikimate-3-phosphate (EPSP) to yield chorismate, which is the branch point compound that serves as the starting substrate for the three terminal pathways of aromatic amino acid biosynthesis. This reaction introduces a second double bond into the aromatic ring system. The sequence is that of Chorismate synthase from Janthinobacterium sp. (strain Marseille) (Minibacterium massiliensis).